Reading from the N-terminus, the 457-residue chain is Adenylosuccinate synthetase isozyme 2 A (457 aa).

GTP is bound by residues Gly40–Lys46 and Gly68–Thr70. Asp41 serves as the catalytic Proton acceptor. The Mg(2+) site is built by Asp41 and Gly68. Asp41 is a substrate binding site. IMP-binding positions include Asp41–Lys44, Asn66–His69, Thr163, Arg177, Asn256, Thr271, and Arg335. The active-site Proton donor is the His69. Val331–Arg337 is a substrate binding site. Residues Arg337, Lys363–Asp365, and Gly445–Lys448 each bind GTP.

This sequence belongs to the adenylosuccinate synthetase family. Homodimer. Requires Mg(2+) as cofactor.

It localises to the cytoplasm. The protein resides in the mitochondrion. It carries out the reaction IMP + L-aspartate + GTP = N(6)-(1,2-dicarboxyethyl)-AMP + GDP + phosphate + 2 H(+). It participates in purine metabolism; AMP biosynthesis via de novo pathway; AMP from IMP: step 1/2. Inhibited competitively by AMP and IMP and non-competitively by fructose 1,6-bisphosphate. Its function is as follows. Plays an important role in the de novo pathway and in the salvage pathway of purine nucleotide biosynthesis. Catalyzes the first committed step in the biosynthesis of AMP from IMP. The polypeptide is Adenylosuccinate synthetase isozyme 2 A (adss2-a) (Xenopus tropicalis (Western clawed frog)).